The chain runs to 64 residues: Alpha-conotoxin-like Lp1.8 (64 aa).

Positions 1–21 (MGMRMMFTMFLLVVLTTTVVS) are cleaved as a signal peptide. Residues 22–41 (FNSDRESNHENRRTSNQITR) constitute a propeptide that is removed on maturation. Cystine bridges form between Cys-47/Cys-53 and Cys-48/Cys-61. Residues 49-51 (KDP) are lacks the Ser-Xaa-Pro motif that is crucial for potent interaction with nAChR.

Belongs to the conotoxin A superfamily. Expressed by the venom duct.

Its subcellular location is the secreted. Its function is as follows. Alpha-conotoxins act on postsynaptic membranes, they bind to the nicotinic acetylcholine receptors (nAChR) and thus inhibit them. Has possibly a distinct nAChR binding mode from other alpha-conotoxins, due to a different three residue motif (Lys-Xaa-Pro instead of the conserved Ser-Xaa-Pro motif). This is Alpha-conotoxin-like Lp1.8 from Conus leopardus (Leopard cone).